Reading from the N-terminus, the 37-residue chain is Large ribosomal subunit protein bL36 (37 aa).

It belongs to the bacterial ribosomal protein bL36 family.

The chain is Large ribosomal subunit protein bL36 from Staphylococcus aureus (strain Mu3 / ATCC 700698).